A 311-amino-acid chain; its full sequence is Sulfate adenylyltransferase subunit 2 (311 aa).

The protein belongs to the PAPS reductase family. CysD subfamily. In terms of assembly, heterodimer composed of CysD, the smaller subunit, and CysN.

It carries out the reaction sulfate + ATP + H(+) = adenosine 5'-phosphosulfate + diphosphate. It participates in sulfur metabolism; hydrogen sulfide biosynthesis; sulfite from sulfate: step 1/3. Functionally, with CysN forms the ATP sulfurylase (ATPS) that catalyzes the adenylation of sulfate producing adenosine 5'-phosphosulfate (APS) and diphosphate, the first enzymatic step in sulfur assimilation pathway. APS synthesis involves the formation of a high-energy phosphoric-sulfuric acid anhydride bond driven by GTP hydrolysis by CysN coupled to ATP hydrolysis by CysD. This is Sulfate adenylyltransferase subunit 2 from Methylobacterium sp. (strain 4-46).